The sequence spans 418 residues: Tyrosine--tRNA ligase (418 aa).

Tyrosine 34 is a binding site for L-tyrosine. The 'HIGH' region motif lies at 39-48 (PTGDSMHIGH). The L-tyrosine site is built by tyrosine 166 and glutamine 170. A 'KMSKS' region motif is present at residues 228-232 (KFGKT). Lysine 231 provides a ligand contact to ATP. Residues 350–418 (QNIVLWLVDA…KKRYFLAHVK (69 aa)) form the S4 RNA-binding domain.

It belongs to the class-I aminoacyl-tRNA synthetase family. TyrS type 1 subfamily. Homodimer.

It localises to the cytoplasm. The enzyme catalyses tRNA(Tyr) + L-tyrosine + ATP = L-tyrosyl-tRNA(Tyr) + AMP + diphosphate + H(+). Functionally, catalyzes the attachment of tyrosine to tRNA(Tyr) in a two-step reaction: tyrosine is first activated by ATP to form Tyr-AMP and then transferred to the acceptor end of tRNA(Tyr). This is Tyrosine--tRNA ligase from Lactiplantibacillus plantarum (strain ATCC BAA-793 / NCIMB 8826 / WCFS1) (Lactobacillus plantarum).